The primary structure comprises 359 residues: Phospho-N-acetylmuramoyl-pentapeptide-transferase (359 aa).

10 helical membrane passes run 3-23 (QILI…PVLI), 55-75 (VAIL…GLAF), 80-100 (IGAS…VGFI), 117-137 (TAKT…VLQF), 156-176 (IATV…IVSA), 187-207 (LDGL…LITF), 231-251 (LALI…WNAA), 255-275 (IFMG…LSVT), 280-300 (ILAV…VLQI), and 334-354 (FWLL…GEWL).

Belongs to the glycosyltransferase 4 family. MraY subfamily. Requires Mg(2+) as cofactor.

It localises to the cell membrane. The catalysed reaction is UDP-N-acetyl-alpha-D-muramoyl-L-alanyl-gamma-D-glutamyl-meso-2,6-diaminopimeloyl-D-alanyl-D-alanine + di-trans,octa-cis-undecaprenyl phosphate = di-trans,octa-cis-undecaprenyl diphospho-N-acetyl-alpha-D-muramoyl-L-alanyl-D-glutamyl-meso-2,6-diaminopimeloyl-D-alanyl-D-alanine + UMP. The protein operates within cell wall biogenesis; peptidoglycan biosynthesis. Catalyzes the initial step of the lipid cycle reactions in the biosynthesis of the cell wall peptidoglycan: transfers peptidoglycan precursor phospho-MurNAc-pentapeptide from UDP-MurNAc-pentapeptide onto the lipid carrier undecaprenyl phosphate, yielding undecaprenyl-pyrophosphoryl-MurNAc-pentapeptide, known as lipid I. The protein is Phospho-N-acetylmuramoyl-pentapeptide-transferase of Mycobacterium tuberculosis (strain ATCC 25177 / H37Ra).